We begin with the raw amino-acid sequence, 570 residues long: Double-stranded RNA-binding protein Staufen homolog 2 (570 aa).

One can recognise a DRBM 1 domain in the interval 8–75; the sequence is TPVCLVNELA…ANKALTESTL (68 aa). 2 disordered regions span residues 71 to 94 and 178 to 203; these read TEST…PGSI and ALQN…DDKD. Over residues 83-94 the composition is skewed to polar residues; that stretch reads PKSNVNNNPGSI. Residues 95-181 enclose the DRBM 2 domain; the sequence is TPTVELNGLA…AMKALQALQN (87 aa). The residue at position 188 (Ser188) is a Phosphoserine. Residues 194–203 are compositionally biased toward basic and acidic residues; that stretch reads SGKEMDDDKD. 2 DRBM domains span residues 207–274 and 307–375; these read SEIS…ELKK and NPIS…QLGY. Short sequence motifs (nuclear localization signal) lie at residues 273–291 and 373–412; these read KKLP…FKKR and LGYK…PKGI. Positions 381–413 are disordered; sequence LQDPLDKTGENKGWSGPKPGFPEPTNNTPKGIL. A required for dendritic transport region spans residues 381–570; sequence LQDPLDKTGE…QDCKKSKSAI (190 aa). Ser395 is subject to Phosphoserine. Thr405 bears the Phosphothreonine mark. A phosphoserine mark is found at Ser416, Ser426, Ser440, Ser455, and Ser492. Residues 545-570 are disordered; that stretch reads LREKADNNQAKPASISQDCKKSKSAI. Over residues 551–561 the composition is skewed to polar residues; it reads NNQAKPASISQ.

In terms of assembly, interacts with microtubules. Isoform 2 and isoform 3 may also interact with ribosomes, and this association is independent of translation. Identified in a mRNP complex, at least composed of DHX9, DDX3X, ELAVL1, HNRNPU, IGF2BP1, ILF3, PABPC1, PCBP2, PTBP2, STAU1, STAU2, SYNCRIP and YBX1. Interacts with the exportin XPO5. This requires RNA and RAN bound to GTP. Interacts with TRIM71 (via NHL repeats) in an RNA-dependent manner. In terms of tissue distribution, expressed in brain and neurons, where isoform 2 and isoform 3 appear to be the most abundant. Expressed at the neuromuscular junction of the extensor digitorum longus, tibialis anterior and soleus muscles. Expression at neuromuscular junctions is most pronounced in slow-twitch muscle. Also weakly expressed in heart, kidney, ovary and testis.

The protein localises to the cytoplasm. The protein resides in the nucleus. It localises to the nucleolus. Its subcellular location is the endoplasmic reticulum. Functionally, RNA-binding protein required for the microtubule-dependent transport of neuronal RNA from the cell body to the dendrite. As protein synthesis occurs within the dendrite, the localization of specific mRNAs to dendrites may be a prerequisite for neurite outgrowth and plasticity at sites distant from the cell body. This Mus musculus (Mouse) protein is Double-stranded RNA-binding protein Staufen homolog 2 (Stau2).